The primary structure comprises 416 residues: Squamosa promoter-binding-like protein 8 (416 aa).

The tract at residues 11–53 (SSCDDFGYNATPPPPPSLLPIMDQDGGGGSIQRDHHHHHNHQQ) is disordered. The SBP-type zinc-finger motif lies at 182 to 260 (PPRCQAEGCK…ADHNRRRRKS (79 aa)). The Zn(2+) site is built by C185, C190, C207, H210, C227, C230, H234, and C246. The Bipartite nuclear localization signal motif lies at 243-259 (KKSCRKRLADHNRRRRK). Residues 250–299 (LADHNRRRRKSKPSDGEHSGEKRRAQANKSAATKDKAGSSSKNAGIGDGF) form a disordered region. Residues 261–273 (KPSDGEHSGEKRR) show a composition bias toward basic and acidic residues.

In terms of tissue distribution, expressed in stems, leaf sheaths, and young panicles.

The protein localises to the nucleus. Probable transcription factor that plays an important role in building the laminar joint between leaf blade and leaf sheath boundary, thereby controlling ligule and auricle development. This is Squamosa promoter-binding-like protein 8 (SPL8) from Oryza sativa subsp. indica (Rice).